Reading from the N-terminus, the 306-residue chain is MKTVPAMLGTPRLFREFFILHLGLWSILCEKATKRNDEECPVQLTITRNSKQSARTGELFKIQCPVKYCVHRPNVTWCKHNGTICVPLEVSPQLYTSWEENQSVPVFVLHFKPIHLSDNGSYSCSTNFNSQVINSHSVTIHVRERTQNSSEHPLITVSDIPDATNASGPSTMEERPGRTWLLYTLLPLGALLLLLACVCLLCFLKRIQGKEKKPSDLAGRDTNLVDIPASSRTNHQALPSGTGIYDNDPWSSMQDESELTISLQSERNNQGIVYASLNHCVIGRNPRQENNMQEAPTEYASICVRS.

The signal sequence occupies residues 1–29 (MKTVPAMLGTPRLFREFFILHLGLWSILC). At 30-183 (EKATKRNDEE…ERPGRTWLLY (154 aa)) the chain is on the extracellular side. In terms of domain architecture, Ig-like V-type spans 37–139 (DEECPVQLTI…SQVINSHSVT (103 aa)). 3 disulfides stabilise this stretch: C40/C69, C64/C124, and C78/C85. N74, N81, N101, N119, N148, and N165 each carry an N-linked (GlcNAc...) asparagine glycan. Residues 184–204 (TLLPLGALLLLLACVCLLCFL) traverse the membrane as a helical segment. Over 205–306 (KRIQGKEKKP…TEYASICVRS (102 aa)) the chain is Cytoplasmic.

Interacts with tyrosine phosphatases PTPN6/SHP-1 and PTPN11/SHP-2. Interacts with TNFRSF14/HVEM (via cysteine-rich domain 1). In terms of processing, phosphorylated on Tyr residues by TNFRSF14 and by antigen receptors cross-linking, both inducing association with PTPN6 and PTPN11. N-glycosylated. Expressed in splenic T- and B-cells as well as lymph node tissues but very weakly in somatic tissues. Also expressed in macrophages, NK cells and dendritic cells. A polymorphic tissue distribution between several strains is seen.

The protein localises to the cell membrane. Inhibitory receptor on lymphocytes that negatively regulates antigen receptor signaling via PTPN6/SHP-1 and PTPN11/SHP-2. May interact in cis (on the same cell) or in trans (on other cells) with TNFRSF14. In cis interactions, appears to play an immune regulatory role inhibiting in trans interactions in naive T cells to maintain a resting state. In trans interactions, can predominate during adaptive immune response to provide survival signals to effector T cells. In Mus musculus (Mouse), this protein is B- and T-lymphocyte attenuator.